Here is a 371-residue protein sequence, read N- to C-terminus: Dual-specificity RNA methyltransferase RlmN (371 aa).

Residue Glu92 is the Proton acceptor of the active site. The Radical SAM core domain occupies 98–337 (EADRATLCVS…VTVRKTRGDD (240 aa)). An intrachain disulfide couples Cys105 to Cys342. Cys112, Cys116, and Cys119 together coordinate [4Fe-4S] cluster. S-adenosyl-L-methionine-binding positions include 166–167 (GE), Ser198, 220–222 (SLH), and Asn299. Cys342 serves as the catalytic S-methylcysteine intermediate.

It belongs to the radical SAM superfamily. RlmN family. It depends on [4Fe-4S] cluster as a cofactor.

It localises to the cytoplasm. It carries out the reaction adenosine(2503) in 23S rRNA + 2 reduced [2Fe-2S]-[ferredoxin] + 2 S-adenosyl-L-methionine = 2-methyladenosine(2503) in 23S rRNA + 5'-deoxyadenosine + L-methionine + 2 oxidized [2Fe-2S]-[ferredoxin] + S-adenosyl-L-homocysteine. It catalyses the reaction adenosine(37) in tRNA + 2 reduced [2Fe-2S]-[ferredoxin] + 2 S-adenosyl-L-methionine = 2-methyladenosine(37) in tRNA + 5'-deoxyadenosine + L-methionine + 2 oxidized [2Fe-2S]-[ferredoxin] + S-adenosyl-L-homocysteine. Specifically methylates position 2 of adenine 2503 in 23S rRNA and position 2 of adenine 37 in tRNAs. m2A2503 modification seems to play a crucial role in the proofreading step occurring at the peptidyl transferase center and thus would serve to optimize ribosomal fidelity. The protein is Dual-specificity RNA methyltransferase RlmN of Actinobacillus succinogenes (strain ATCC 55618 / DSM 22257 / CCUG 43843 / 130Z).